Consider the following 852-residue polypeptide: DNA double-strand break repair Rad50 ATPase (852 aa).

ATP is bound by residues Asn-32, Gly-33, Ala-34, Gly-35, Lys-36, Ser-37, Ser-38, Arg-53, Tyr-54, Asp-59, Val-61, and Arg-63. Ser-37 is a Mg(2+) binding site. Gln-142 serves as a coordination point for Mg(2+). Coiled coils occupy residues 155–345 (EITE…EELD) and 389–427 (LLSI…QIAS). Positions 389–488 (LLSIEKTENE…SLSSLIEDLL (100 aa)) constitute a Zinc-hook domain. Positions 435 and 438 each coordinate Zn(2+). 2 coiled-coil regions span residues 460 to 488 (DQKR…EDLL) and 534 to 711 (KIEE…LFDK). Residue Asp-797 coordinates Mg(2+).

It belongs to the SMC family. RAD50 subfamily. In terms of assembly, homodimer. Forms a complex with Mre11. Zn(2+) is required as a cofactor.

It carries out the reaction ATP + H2O = ADP + phosphate + H(+). Involved in DNA double-strand break repair (DSBR). The Rad50/Mre11 complex possesses single-strand endonuclease activity and ATP-dependent double-strand-specific 3'-5' exonuclease activity. Rad50 provides an ATP-dependent control of Mre11 by positioning DNA ends into the Mre11 active site: ATP-binding induces a large structural change from an open form with accessible Mre11 nuclease sites into a closed form. In Thermotoga maritima (strain ATCC 43589 / DSM 3109 / JCM 10099 / NBRC 100826 / MSB8), this protein is DNA double-strand break repair Rad50 ATPase.